The following is a 191-amino-acid chain: GDP-mannose pyrophosphatase (191 aa).

Residues Y17, 38–40 (KRE), R67, and 85–87 (AGL) contribute to the GDP-alpha-D-mannose site. The region spanning 43 to 180 (DRGNGATILL…EIRDGKTVLL (138 aa)) is the Nudix hydrolase domain. Residues A85, E100, and E104 each contribute to the Mg(2+) site. Positions 86 to 106 (GLLDNDEPEVCIRKEAIEETG) match the Nudix box motif. Residues E104, E127, 150–151 (DE), and K176 contribute to the GDP-alpha-D-mannose site. E151 contacts Mg(2+).

This sequence belongs to the Nudix hydrolase family. NudK subfamily. In terms of assembly, homodimer. Mg(2+) is required as a cofactor.

The catalysed reaction is GDP-alpha-D-mannose + H2O = alpha-D-mannose 1-phosphate + GMP + 2 H(+). Its function is as follows. Nucleoside diphosphate sugar hydrolase that hydrolyzes GDP-mannose as its preferred substrate, yielding GMP and mannose-1-phosphate. This chain is GDP-mannose pyrophosphatase (nudK), found in Salmonella typhi.